Consider the following 253-residue polypeptide: Discoidin-1 subunit A (253 aa).

S2 is subject to N-acetylserine. Residues 2-152 (STQGLVQLLA…ISLRCEFYTQ (151 aa)) form the F5/8 type C domain. The Cell attachment site signature appears at 79–81 (RGD).

As to quaternary structure, tetramer of four different chains (A to D). Stalk cells.

The protein localises to the cytoplasm. Functionally, galactose- and N-acetylgalactosamine-binding lectin. May play a role in cell-substratum adhesion rather than in cell-cell adhesion. May be necessary for the maintenance of normal elongate morphology during aggregation. This chain is Discoidin-1 subunit A (dscA-1), found in Dictyostelium discoideum (Social amoeba).